The sequence spans 200 residues: 3-isopropylmalate dehydratase small subunit (200 aa).

The protein belongs to the LeuD family. LeuD type 1 subfamily. Heterodimer of LeuC and LeuD.

The enzyme catalyses (2R,3S)-3-isopropylmalate = (2S)-2-isopropylmalate. It functions in the pathway amino-acid biosynthesis; L-leucine biosynthesis; L-leucine from 3-methyl-2-oxobutanoate: step 2/4. Its function is as follows. Catalyzes the isomerization between 2-isopropylmalate and 3-isopropylmalate, via the formation of 2-isopropylmaleate. The polypeptide is 3-isopropylmalate dehydratase small subunit (Actinobacillus pleuropneumoniae serotype 5b (strain L20)).